Reading from the N-terminus, the 433-residue chain is Enolase (433 aa).

Q167 is a binding site for (2R)-2-phosphoglycerate. E209 functions as the Proton donor in the catalytic mechanism. D246 serves as a coordination point for Mg(2+). Positions 252 to 260 (FYDAEKKEY) match the Plasminogen-binding motif motif. Mg(2+)-binding residues include E291 and D318. The (2R)-2-phosphoglycerate site is built by K343, R372, S373, and K394. The active-site Proton acceptor is the K343.

Belongs to the enolase family. As to quaternary structure, component of the RNA degradosome, a multiprotein complex involved in RNA processing and mRNA degradation. Mg(2+) serves as cofactor.

It localises to the cell inner membrane. It is found in the cell outer membrane. The protein resides in the cytoplasm. The protein localises to the secreted. Its subcellular location is the cell surface. It carries out the reaction (2R)-2-phosphoglycerate = phosphoenolpyruvate + H2O. Its pathway is carbohydrate degradation; glycolysis; pyruvate from D-glyceraldehyde 3-phosphate: step 4/5. Functionally, catalyzes the reversible conversion of 2-phosphoglycerate (2-PG) into phosphoenolpyruvate (PEP). It is essential for the degradation of carbohydrates via glycolysis. Its function is as follows. 'Moonlights' as a plasminogen receptor and plasmin activator. Binds host (human) plasminogen in vitro. Binds human plasmin and plasminogen on the cell surface; enhances the activity of host tissue-specific plasminogen activator (tPA). Plasmin bound to bacteria is partially protected from its physiological inhibitor alpha-2AP (SERPINF2). The protein is Enolase of Aeromonas hydrophila.